Reading from the N-terminus, the 368-residue chain is tRNA-specific 2-thiouridylase MnmA (368 aa).

ATP-binding positions include 10–17 and Met-36; that span reads AMSGGIDS. Cys-106 functions as the Nucleophile in the catalytic mechanism. An intrachain disulfide couples Cys-106 to Cys-203. Residue Gly-130 coordinates ATP. Positions 152–154 are interaction with tRNA; it reads KDQ. The active-site Cysteine persulfide intermediate is Cys-203. An interaction with tRNA region spans residues 313–314; that stretch reads RY.

It belongs to the MnmA/TRMU family.

The protein resides in the cytoplasm. The catalysed reaction is S-sulfanyl-L-cysteinyl-[protein] + uridine(34) in tRNA + AH2 + ATP = 2-thiouridine(34) in tRNA + L-cysteinyl-[protein] + A + AMP + diphosphate + H(+). Functionally, catalyzes the 2-thiolation of uridine at the wobble position (U34) of tRNA, leading to the formation of s(2)U34. In Cytophaga hutchinsonii (strain ATCC 33406 / DSM 1761 / CIP 103989 / NBRC 15051 / NCIMB 9469 / D465), this protein is tRNA-specific 2-thiouridylase MnmA.